A 250-amino-acid polypeptide reads, in one-letter code: Octanoyltransferase (250 aa).

In terms of domain architecture, BPL/LPL catalytic spans 49–230 (DEINDVILVL…ALDDAFAGRL (182 aa)). Substrate contacts are provided by residues 87 to 94 (RGGRITWH), 160 to 162 (ALG), and 173 to 175 (GLA). Cysteine 191 (acyl-thioester intermediate) is an active-site residue.

It belongs to the LipB family.

It is found in the cytoplasm. It catalyses the reaction octanoyl-[ACP] + L-lysyl-[protein] = N(6)-octanoyl-L-lysyl-[protein] + holo-[ACP] + H(+). The protein operates within protein modification; protein lipoylation via endogenous pathway; protein N(6)-(lipoyl)lysine from octanoyl-[acyl-carrier-protein]: step 1/2. Its function is as follows. Catalyzes the transfer of endogenously produced octanoic acid from octanoyl-acyl-carrier-protein onto the lipoyl domains of lipoate-dependent enzymes. Lipoyl-ACP can also act as a substrate although octanoyl-ACP is likely to be the physiological substrate. This chain is Octanoyltransferase, found in Corynebacterium diphtheriae (strain ATCC 700971 / NCTC 13129 / Biotype gravis).